Consider the following 98-residue polypeptide: NADH-ubiquinone oxidoreductase chain 4L (98 aa).

A run of 3 helical transmembrane segments spans residues Met1–Met21, Ser29–Leu49, and Ile61–Val81.

This sequence belongs to the complex I subunit 4L family. Core subunit of respiratory chain NADH dehydrogenase (Complex I) which is composed of 45 different subunits.

It is found in the mitochondrion inner membrane. It carries out the reaction a ubiquinone + NADH + 5 H(+)(in) = a ubiquinol + NAD(+) + 4 H(+)(out). Functionally, core subunit of the mitochondrial membrane respiratory chain NADH dehydrogenase (Complex I) which catalyzes electron transfer from NADH through the respiratory chain, using ubiquinone as an electron acceptor. Part of the enzyme membrane arm which is embedded in the lipid bilayer and involved in proton translocation. The polypeptide is NADH-ubiquinone oxidoreductase chain 4L (MT-ND4L) (Eumetopias jubatus (Steller sea lion)).